The sequence spans 772 residues: Serine/threonine-protein kinase tousled-like 2 (772 aa).

Residues Gly-24–Gln-126 form a disordered region. A compositionally biased stretch (polar residues) spans Pro-29–Ser-44. Residues Ser-46–Arg-61 are compositionally biased toward basic and acidic residues. Phosphoserine occurs at positions 73, 94, 99, 115, 117, and 134. Positions Gln-180–Thr-208 are disordered. The segment at Asn-225–Glu-276 is required for interaction with TLK1 and DYNLL1/LC8. Coiled coils occupy residues Asn-225–Glu-276 and Ala-317–Pro-347. The disordered stretch occupies residues Leu-342 to Thr-385. A compositionally biased stretch (polar residues) spans Thr-367 to Thr-380. Residues His-403–Gln-451 are a coiled coil. A Protein kinase domain is found at Tyr-462–Leu-741. ATP-binding positions include Leu-468–Val-476 and Lys-491. The Proton acceptor role is filled by Asp-592. Ser-750 carries the phosphoserine; by CHEK1 modification.

The protein belongs to the protein kinase superfamily. Ser/Thr protein kinase family. As to quaternary structure, monomer. May form homodimers; homodimerization may enhance autophosphoylation and enzymatic activity. Heterodimer with TLK1. Interacts with YWHAZ; association with 14-3-3 proteins such as YWHAZ regulates subcellular location. May also interact with FEZ1/LZTS1 and FEZ2. Interacts with CHD7 and CHD8. Interacts with DYNLL1/LC8. It depends on Mg(2+) as a cofactor. Post-translationally, phosphorylated at Ser-750, probably by CHEK1. Autophosphorylated; phosphorylation promotes the assembly of higher order oligomers and enzymatic activity. In terms of tissue distribution, detected in placenta, fetal liver, kidney, pancreas, heart and skeletal muscle. Highly expressed in testis. Detected in spleen, thymus, colon, ovary, small intestine, prostate and peripheral blood leukocytes. Almost undetectable in liver and lung.

It is found in the nucleus. It localises to the nucleoplasm. The protein resides in the cytoplasm. Its subcellular location is the perinuclear region. The protein localises to the cytoskeleton. The enzyme catalyses L-seryl-[protein] + ATP = O-phospho-L-seryl-[protein] + ADP + H(+). The catalysed reaction is L-threonyl-[protein] + ATP = O-phospho-L-threonyl-[protein] + ADP + H(+). Its activity is regulated as follows. Cell cycle-regulated, with maximal activity in the S-phase. Rapidly and transiently inhibited by phosphorylation following the generation of DNA double-stranded breaks during S-phase, probably by CHEK1, possibly at Ser-750. This inhibition is cell cycle checkpoint- and ATM-dependent. In terms of biological role, serine/threonine-protein kinase involved in the process of chromatin assembly and probably also DNA replication, transcription, repair, and chromosome segregation. Phosphorylates the chromatin assembly factors ASF1A and ASF1B. Phosphorylation of ASF1A prevents its proteasome-mediated degradation, thereby enhancing chromatin assembly. Negative regulator of amino acid starvation-induced autophagy. The sequence is that of Serine/threonine-protein kinase tousled-like 2 from Homo sapiens (Human).